Consider the following 467-residue polypeptide: ATP synthase subunit beta (467 aa).

150-157 contributes to the ATP binding site; sequence GGAGVGKT.

Belongs to the ATPase alpha/beta chains family. As to quaternary structure, F-type ATPases have 2 components, CF(1) - the catalytic core - and CF(0) - the membrane proton channel. CF(1) has five subunits: alpha(3), beta(3), gamma(1), delta(1), epsilon(1). CF(0) has three main subunits: a(1), b(2) and c(9-12). The alpha and beta chains form an alternating ring which encloses part of the gamma chain. CF(1) is attached to CF(0) by a central stalk formed by the gamma and epsilon chains, while a peripheral stalk is formed by the delta and b chains.

It is found in the cell inner membrane. The catalysed reaction is ATP + H2O + 4 H(+)(in) = ADP + phosphate + 5 H(+)(out). In terms of biological role, produces ATP from ADP in the presence of a proton gradient across the membrane. The catalytic sites are hosted primarily by the beta subunits. The sequence is that of ATP synthase subunit beta from Vibrio vulnificus (strain YJ016).